The sequence spans 273 residues: Dermonecrotic toxin SdSicTox-betaIIB1bxi (273 aa).

Histidine 4 is a catalytic residue. Residues glutamate 24 and aspartate 26 each coordinate Mg(2+). Histidine 40 (nucleophile) is an active-site residue. Cystine bridges form between cysteine 44/cysteine 50 and cysteine 46/cysteine 189. Aspartate 84 provides a ligand contact to Mg(2+).

The protein belongs to the arthropod phospholipase D family. Class II subfamily. Mg(2+) serves as cofactor. Expressed by the venom gland.

The protein localises to the secreted. The enzyme catalyses an N-(acyl)-sphingosylphosphocholine = an N-(acyl)-sphingosyl-1,3-cyclic phosphate + choline. It catalyses the reaction an N-(acyl)-sphingosylphosphoethanolamine = an N-(acyl)-sphingosyl-1,3-cyclic phosphate + ethanolamine. It carries out the reaction a 1-acyl-sn-glycero-3-phosphocholine = a 1-acyl-sn-glycero-2,3-cyclic phosphate + choline. The catalysed reaction is a 1-acyl-sn-glycero-3-phosphoethanolamine = a 1-acyl-sn-glycero-2,3-cyclic phosphate + ethanolamine. Dermonecrotic toxins cleave the phosphodiester linkage between the phosphate and headgroup of certain phospholipids (sphingolipid and lysolipid substrates), forming an alcohol (often choline) and a cyclic phosphate. This toxin acts on sphingomyelin (SM). It may also act on ceramide phosphoethanolamine (CPE), lysophosphatidylcholine (LPC) and lysophosphatidylethanolamine (LPE), but not on lysophosphatidylserine (LPS), and lysophosphatidylglycerol (LPG). It acts by transphosphatidylation, releasing exclusively cyclic phosphate products as second products. Induces dermonecrosis, hemolysis, increased vascular permeability, edema, inflammatory response, and platelet aggregation. This chain is Dermonecrotic toxin SdSicTox-betaIIB1bxi, found in Sicarius cf. damarensis (strain GJB-2008) (Six-eyed sand spider).